Reading from the N-terminus, the 211-residue chain is Protein-L-isoaspartate O-methyltransferase (211 aa).

Residue S62 is part of the active site.

The protein belongs to the methyltransferase superfamily. L-isoaspartyl/D-aspartyl protein methyltransferase family.

The protein resides in the cytoplasm. It catalyses the reaction [protein]-L-isoaspartate + S-adenosyl-L-methionine = [protein]-L-isoaspartate alpha-methyl ester + S-adenosyl-L-homocysteine. Functionally, catalyzes the methyl esterification of L-isoaspartyl residues in peptides and proteins that result from spontaneous decomposition of normal L-aspartyl and L-asparaginyl residues. It plays a role in the repair and/or degradation of damaged proteins. The protein is Protein-L-isoaspartate O-methyltransferase of Shewanella baltica (strain OS195).